Reading from the N-terminus, the 487-residue chain is Putative beta-glucosidase 35 (487 aa).

The first 27 residues, 1-27, serve as a signal peptide directing secretion; the sequence is MGIRMGRRLLLITLLLGALLCNNVAYA. An a beta-D-glucoside-binding site is contributed by Gln48. Asn76 and Asn116 each carry an N-linked (GlcNAc...) asparagine glycan. Residues His151 and 200–201 each bind a beta-D-glucoside; that span reads NE. The Proton donor role is filled by Glu201. Cys220 and Cys228 form a disulfide bridge. Tyr344 contacts a beta-D-glucoside. N-linked (GlcNAc...) asparagine glycosylation occurs at Asn369. Glu414 lines the a beta-D-glucoside pocket. Glu414 acts as the Nucleophile in catalysis. 2 N-linked (GlcNAc...) asparagine glycosylation sites follow: Asn418 and Asn419. Phe458 is an a beta-D-glucoside binding site.

This sequence belongs to the glycosyl hydrolase 1 family.

The catalysed reaction is Hydrolysis of terminal, non-reducing beta-D-glucosyl residues with release of beta-D-glucose.. This is Putative beta-glucosidase 35 (BGLU35) from Oryza sativa subsp. japonica (Rice).